Here is a 106-residue protein sequence, read N- to C-terminus: Iron-sulfur cluster assembly protein CyaY (106 aa).

Belongs to the frataxin family.

Its function is as follows. Involved in iron-sulfur (Fe-S) cluster assembly. May act as a regulator of Fe-S biogenesis. The protein is Iron-sulfur cluster assembly protein CyaY of Yersinia pestis bv. Antiqua (strain Antiqua).